The sequence spans 316 residues: Ornithine carbamoyltransferase (316 aa).

Carbamoyl phosphate-binding positions include 59–62 (STRT), Q86, R110, and 137–140 (HPCQ). Residues N168, D232, and 236 to 237 (SM) contribute to the L-ornithine site. Carbamoyl phosphate contacts are provided by residues 273–274 (CL) and R301.

It belongs to the aspartate/ornithine carbamoyltransferase superfamily. OTCase family.

It localises to the cytoplasm. It carries out the reaction carbamoyl phosphate + L-ornithine = L-citrulline + phosphate + H(+). The protein operates within amino-acid biosynthesis; L-arginine biosynthesis; L-arginine from L-ornithine and carbamoyl phosphate: step 1/3. In terms of biological role, reversibly catalyzes the transfer of the carbamoyl group from carbamoyl phosphate (CP) to the N(epsilon) atom of ornithine (ORN) to produce L-citrulline. This Listeria monocytogenes serovar 1/2a (strain ATCC BAA-679 / EGD-e) protein is Ornithine carbamoyltransferase (argF).